The primary structure comprises 398 residues: Tryptophan synthase beta chain (398 aa).

K88 is subject to N6-(pyridoxal phosphate)lysine.

This sequence belongs to the TrpB family. Tetramer of two alpha and two beta chains. Pyridoxal 5'-phosphate serves as cofactor.

The catalysed reaction is (1S,2R)-1-C-(indol-3-yl)glycerol 3-phosphate + L-serine = D-glyceraldehyde 3-phosphate + L-tryptophan + H2O. It functions in the pathway amino-acid biosynthesis; L-tryptophan biosynthesis; L-tryptophan from chorismate: step 5/5. The beta subunit is responsible for the synthesis of L-tryptophan from indole and L-serine. The chain is Tryptophan synthase beta chain from Actinobacillus succinogenes (strain ATCC 55618 / DSM 22257 / CCUG 43843 / 130Z).